Reading from the N-terminus, the 554-residue chain is Hedycaryol synthase (554 aa).

(2E,6E)-farnesyl diphosphate is bound by residues Arg270, Asp307, Asp311, Arg449, and Asp452. Mg(2+) contacts are provided by Asp307 and Asp311. The DDXXD motif signature appears at 307 to 311 (DDTYD). Residues Asp452, Ser456, and Glu460 each contribute to the Mg(2+) site.

Belongs to the terpene synthase family. It depends on Mg(2+) as a cofactor. As to expression, specifically expressed in flowers.

It carries out the reaction (2E,6E)-farnesyl diphosphate + H2O = (2E,6E)-hedycaryol + diphosphate. The protein operates within secondary metabolite biosynthesis; terpenoid biosynthesis. In terms of biological role, sesquiterpene synthase that catalyzes the formation of sesquiterpenes and sesquiterpenoid alcohols. Converts farnesyl diphosphate (FPP) to hedycaryol. Hedycaryol is likely to be one of the terpenes that attract insects for pollination of Camellia brevistyla. The chain is Hedycaryol synthase from Camellia brevistyla.